A 243-amino-acid polypeptide reads, in one-letter code: Vimentin A2 (243 aa).

The interval 1 to 22 (GFSLQDELDFLKKLHDEELADV) is coil 1B. The IF rod domain occupies 1–188 (GFSLQDELDF…KLLEGEESRI (188 aa)). A linker 12 region spans residues 23-45 (QAQIQDQQVQVDMDMAKPDLTAA). The interval 46 to 184 (LRDVRLQYEN…ATYRKLLEGE (139 aa)) is coil 2. Positions 185–243 (ESRITTPLPNLSSFNLRDAILETKPILENTFSKKVLIKTIETRDGEVINESTQNHDDLE) are tail.

It belongs to the intermediate filament family. In terms of assembly, homomer. In terms of processing, one of the most prominent phosphoproteins in various cells of mesenchymal origin. Phosphorylation is enhanced during cell division, at which time vimentin filaments are significantly reorganized. Expressed in low amounts in retina, optic nerve, and brain and in higher amounts in spinal cord.

Its function is as follows. Vimentins are class-III intermediate filaments found in various non-epithelial cells, especially mesenchymal cells. Vimentin is attached to the nucleus, endoplasmic reticulum, and mitochondria, either laterally or terminally. The protein is Vimentin A2 of Carassius auratus (Goldfish).